The sequence spans 122 residues: Large ribosomal subunit protein uL14 (122 aa).

It belongs to the universal ribosomal protein uL14 family. Part of the 50S ribosomal subunit. Forms a cluster with proteins L3 and L19. In the 70S ribosome, L14 and L19 interact and together make contacts with the 16S rRNA in bridges B5 and B8.

Binds to 23S rRNA. Forms part of two intersubunit bridges in the 70S ribosome. The chain is Large ribosomal subunit protein uL14 from Staphylococcus aureus (strain MW2).